The chain runs to 313 residues: Methionyl-tRNA formyltransferase (313 aa).

A (6S)-5,6,7,8-tetrahydrofolate-binding site is contributed by 109-112; sequence SLLP.

Belongs to the Fmt family.

The catalysed reaction is L-methionyl-tRNA(fMet) + (6R)-10-formyltetrahydrofolate = N-formyl-L-methionyl-tRNA(fMet) + (6S)-5,6,7,8-tetrahydrofolate + H(+). Its function is as follows. Attaches a formyl group to the free amino group of methionyl-tRNA(fMet). The formyl group appears to play a dual role in the initiator identity of N-formylmethionyl-tRNA by promoting its recognition by IF2 and preventing the misappropriation of this tRNA by the elongation apparatus. This is Methionyl-tRNA formyltransferase from Thermotoga neapolitana (strain ATCC 49049 / DSM 4359 / NBRC 107923 / NS-E).